Consider the following 325-residue polypeptide: GMP reductase (325 aa).

Catalysis depends on Cys-174, which acts as the Thioimidate intermediate. Residue 203 to 226 (LIADGGIRTHGDIAKSIRFGASMV) coordinates NADP(+).

The protein belongs to the IMPDH/GMPR family. GuaC type 2 subfamily.

It catalyses the reaction IMP + NH4(+) + NADP(+) = GMP + NADPH + 2 H(+). Functionally, catalyzes the irreversible NADPH-dependent deamination of GMP to IMP. It functions in the conversion of nucleobase, nucleoside and nucleotide derivatives of G to A nucleotides, and in maintaining the intracellular balance of A and G nucleotides. In Staphylococcus aureus (strain bovine RF122 / ET3-1), this protein is GMP reductase.